The primary structure comprises 90 residues: Small ribosomal subunit protein bS18 (90 aa).

Residues 1–24 (MKPMRQKPGRGQGNKSISNALASK) are disordered.

It belongs to the bacterial ribosomal protein bS18 family. As to quaternary structure, part of the 30S ribosomal subunit. Forms a tight heterodimer with protein bS6.

Its function is as follows. Binds as a heterodimer with protein bS6 to the central domain of the 16S rRNA, where it helps stabilize the platform of the 30S subunit. The chain is Small ribosomal subunit protein bS18 from Chlorobium phaeovibrioides (strain DSM 265 / 1930) (Prosthecochloris vibrioformis (strain DSM 265)).